The sequence spans 321 residues: Glucokinase (321 aa).

Residue 8-13 participates in ATP binding; sequence GDVGGT.

It belongs to the bacterial glucokinase family.

It is found in the cytoplasm. The enzyme catalyses D-glucose + ATP = D-glucose 6-phosphate + ADP + H(+). This Escherichia fergusonii (strain ATCC 35469 / DSM 13698 / CCUG 18766 / IAM 14443 / JCM 21226 / LMG 7866 / NBRC 102419 / NCTC 12128 / CDC 0568-73) protein is Glucokinase.